A 278-amino-acid polypeptide reads, in one-letter code: Large ribosomal subunit protein uL2 (278 aa).

Disordered regions lie at residues 26–57 (RSTP…QGGG) and 225–278 (VMNP…NKKR). Over residues 258-278 (RSPKKASNKYIVRRRKTNKKR) the composition is skewed to basic residues.

Belongs to the universal ribosomal protein uL2 family. In terms of assembly, part of the 50S ribosomal subunit. Forms a bridge to the 30S subunit in the 70S ribosome.

Its function is as follows. One of the primary rRNA binding proteins. Required for association of the 30S and 50S subunits to form the 70S ribosome, for tRNA binding and peptide bond formation. It has been suggested to have peptidyltransferase activity; this is somewhat controversial. Makes several contacts with the 16S rRNA in the 70S ribosome. The chain is Large ribosomal subunit protein uL2 from Streptomyces coelicolor (strain ATCC BAA-471 / A3(2) / M145).